Here is a 314-residue protein sequence, read N- to C-terminus: Ribosomal RNA small subunit methyltransferase H (314 aa).

Residues 34 to 36 (GGH), aspartate 53, phenylalanine 82, aspartate 103, and glutamine 110 each bind S-adenosyl-L-methionine.

It belongs to the methyltransferase superfamily. RsmH family.

Its subcellular location is the cytoplasm. It catalyses the reaction cytidine(1402) in 16S rRNA + S-adenosyl-L-methionine = N(4)-methylcytidine(1402) in 16S rRNA + S-adenosyl-L-homocysteine + H(+). Specifically methylates the N4 position of cytidine in position 1402 (C1402) of 16S rRNA. This chain is Ribosomal RNA small subunit methyltransferase H, found in Levilactobacillus brevis (strain ATCC 367 / BCRC 12310 / CIP 105137 / JCM 1170 / LMG 11437 / NCIMB 947 / NCTC 947) (Lactobacillus brevis).